We begin with the raw amino-acid sequence, 545 residues long: CTP synthase (545 aa).

The tract at residues 1–266 (MKTNYIFVTG…DDYICKRFSL (266 aa)) is amidoligase domain. Residue serine 14 participates in CTP binding. Residue serine 14 coordinates UTP. ATP-binding positions include 15–20 (SLGKGI) and aspartate 72. Mg(2+) contacts are provided by aspartate 72 and glutamate 140. Residues 147–149 (DIE), 187–192 (KTKPTQ), and lysine 223 each bind CTP. Residues 187–192 (KTKPTQ) and lysine 223 each bind UTP. 239-241 (KDV) lines the ATP pocket. Positions 291-542 (TIGMVGKYVE…VKAAFDYQKG (252 aa)) constitute a Glutamine amidotransferase type-1 domain. L-glutamine is bound at residue glycine 352. Cysteine 379 acts as the Nucleophile; for glutamine hydrolysis in catalysis. Residues 380–383 (LGMQ), glutamate 403, and arginine 470 each bind L-glutamine. Residues histidine 515 and glutamate 517 contribute to the active site.

The protein belongs to the CTP synthase family. In terms of assembly, homotetramer.

The catalysed reaction is UTP + L-glutamine + ATP + H2O = CTP + L-glutamate + ADP + phosphate + 2 H(+). It catalyses the reaction L-glutamine + H2O = L-glutamate + NH4(+). It carries out the reaction UTP + NH4(+) + ATP = CTP + ADP + phosphate + 2 H(+). It participates in pyrimidine metabolism; CTP biosynthesis via de novo pathway; CTP from UDP: step 2/2. Allosterically activated by GTP, when glutamine is the substrate; GTP has no effect on the reaction when ammonia is the substrate. The allosteric effector GTP functions by stabilizing the protein conformation that binds the tetrahedral intermediate(s) formed during glutamine hydrolysis. Inhibited by the product CTP, via allosteric rather than competitive inhibition. Catalyzes the ATP-dependent amination of UTP to CTP with either L-glutamine or ammonia as the source of nitrogen. Regulates intracellular CTP levels through interactions with the four ribonucleotide triphosphates. This chain is CTP synthase, found in Proteus mirabilis (strain HI4320).